A 266-amino-acid chain; its full sequence is Maltodextrose utilization protein MalA (266 aa).

Has a role in maltotetraose utilization. The sequence is that of Maltodextrose utilization protein MalA (malA) from Streptococcus pneumoniae (strain ATCC BAA-255 / R6).